A 344-amino-acid chain; its full sequence is Late embryogenesis abundant protein 17 (344 aa).

Disordered stretches follow at residues 1 to 20 (MASRQDRREARAEADARRAA) and 116 to 258 (KDYT…QGQG). Positions 3 to 52 (SRQDRREARAEADARRAAEEIARARDERVMQAEVDARSAADEIARARADR) form a coiled coil. Composition is skewed to basic and acidic residues over residues 116–163 (KDYT…KDAV), 172–230 (EATK…DATK), and 238–252 (DKARETAATHDDATD).

It belongs to the LEA type 4 family. As to expression, expressed in embryos.

It localises to the nucleus. Its function is as follows. Involved in abiotic stress responses. May function as chaperone and contribute to prevent the formation of damaging protein aggregates. This chain is Late embryogenesis abundant protein 17, found in Oryza sativa subsp. japonica (Rice).